Consider the following 339-residue polypeptide: Large ribosomal subunit protein uL10 (339 aa).

The tract at residues 305–339 is disordered; sequence TQPQQEEKVEEAEEEEEEEEASEEDALAGLGALFG. Acidic residues predominate over residues 312 to 330; sequence KVEEAEEEEEEEEASEEDA.

The protein belongs to the universal ribosomal protein uL10 family. Part of the 50S ribosomal subunit. Forms part of the ribosomal stalk which helps the ribosome interact with GTP-bound translation factors. Forms a heptameric L10(L12)2(L12)2(L12)2 complex, where L10 forms an elongated spine to which the L12 dimers bind in a sequential fashion.

In terms of biological role, forms part of the ribosomal stalk, playing a central role in the interaction of the ribosome with GTP-bound translation factors. In Thermococcus onnurineus (strain NA1), this protein is Large ribosomal subunit protein uL10.